Consider the following 1267-residue polypeptide: Probable cation-transporting ATPase catp-6 (1267 aa).

At 1 to 32 (MVEAGGARRHRMTLESGDHTLTLFAYRTGPFR) the chain is on the extracellular side. Residues 33 to 53 (TILFYALTVLTLGIFRLILHW) form a helical membrane-spanning segment. The Cytoplasmic segment spans residues 54–189 (KQKWDVKMRM…RNEIVVQLRP (136 aa)). Residues 190–210 (ILYLLVMEVITPFYVFQIFSV) traverse the membrane as a helical segment. The Extracellular portion of the chain corresponds to 211–217 (TVWYNDE). A helical transmembrane segment spans residues 218–238 (YAYYASLIVILSLGSIVMDVY). The Cytoplasmic portion of the chain corresponds to 239–390 (QIRTQEIRLR…DFRFTKDLFK (152 aa)). Residues 391–411 (FILFLACISGCGFIYTIIVMI) form a helical membrane-spanning segment. Residues 412-424 (MRGNTLRRIIVRS) lie on the Extracellular side of the membrane. A helical transmembrane segment spans residues 425 to 445 (LDIITITVPPALPAAMSVGII). Residues 446 to 950 (NAQLRLKKKE…VTSFGIFKYM (505 aa)) are Cytoplasmic-facing. D476 acts as the 4-aspartylphosphate intermediate in catalysis. Residues D891 and D895 each coordinate Mg(2+). A helical membrane pass occupies residues 951–971 (AGYSLTQFVTVMHLYWISNIL). At 972–976 (TDGQF) the chain is on the extracellular side. The chain crosses the membrane as a helical span at residues 977 to 997 (MYIDMFLITMFALLFGNTPAF). The Cytoplasmic portion of the chain corresponds to 998 to 1013 (YRLAHTPPPTRLLSIA). A helical transmembrane segment spans residues 1014-1034 (SMTSVVGQLIIIGVVQFIVFF). Over 1035–1058 (STSQQPWFTPYQPPVDDEVEDKRS) the chain is Extracellular. The helical transmembrane segment at 1059–1079 (MQGTALFCVSMFQYIILALVY) threads the bilayer. Residues 1080–1097 (SKGPPFRGNLWSNKPMCA) lie on the Cytoplasmic side of the membrane. A helical membrane pass occupies residues 1098–1118 (LTIFATLLCLFIVIWPTELVL). Residues 1119–1132 (KTLGNVELPSLTFR) lie on the Extracellular side of the membrane. Residues 1133–1153 (IFIVIVGAVNAAVSYGFETLF) traverse the membrane as a helical segment. The Cytoplasmic portion of the chain corresponds to 1154–1267 (VDFFLLGYWE…EEPEKLERTY (114 aa)). The segment at 1232 to 1256 (ERLISRIGGEPTWLTNPIPPHSLSE) is disordered.

This sequence belongs to the cation transport ATPase (P-type) (TC 3.A.3) family. Type V subfamily.

Its subcellular location is the membrane. It catalyses the reaction ATP + H2O = ADP + phosphate + H(+). The sequence is that of Probable cation-transporting ATPase catp-6 from Caenorhabditis elegans.